Reading from the N-terminus, the 406-residue chain is Methyltransferase cfoD (406 aa).

S-adenosyl-L-methionine is bound by residues aspartate 270 and arginine 312. Histidine 315 functions as the Proton acceptor in the catalytic mechanism.

Belongs to the class I-like SAM-binding methyltransferase superfamily. Cation-independent O-methyltransferase family.

It participates in secondary metabolite biosynthesis; flavonoid biosynthesis. Functionally, methyltransferase; part of the gene cluster that mediates the biosynthesis of chlorflavonin, a fungal flavonoid with acetolactate synthase inhibitory activity. Within the pathway, cfoD is responsible for the methylation at position C3-OH of flavonoid. The pathway begins with the PKS-NRPS hybrid synthetase cfoA that uses benzoic acid or p-hydroxybenzoic acid as a starter unit with four rounds of chain elongation using malonyl-CoA to form the chalcone skeleton. Then, a new type of chalcone isomerase, cfoK, catalyzes the conversion of the chalcone into a flavanone by a histidine-mediated oxa-Michael addition mechanism. The desaturation of flavanone to flavone is catalyzed by a new type of flavone synthase, the flavin mononucleotide (FMN)-dependent oxidoreductase cfoJ. Monooxygenases cfoF, cfoG, and P450 cfoH are responsible for the hydroxylation of the flavonoid skeleton at sites C3, C8, and C2', respectively. Like cfoF, the dehydratase cfoI also plays a role in the hydroxylation of position C3. Methyltransferases cfoB, cfoC, and cfoD then catalyze the methylation of C7-OH, C8-OH, and C3-OH, respectively. Finally, the monooxygenase cfoE is responsible for the chlorination of flavonoid at position C3'. The chain is Methyltransferase cfoD from Aspergillus candidus.